The following is a 427-amino-acid chain: Glutamate-1-semialdehyde 2,1-aminomutase (427 aa).

Lysine 267 bears the N6-(pyridoxal phosphate)lysine mark.

This sequence belongs to the class-III pyridoxal-phosphate-dependent aminotransferase family. HemL subfamily. As to quaternary structure, homodimer. It depends on pyridoxal 5'-phosphate as a cofactor.

It localises to the cytoplasm. It catalyses the reaction (S)-4-amino-5-oxopentanoate = 5-aminolevulinate. It functions in the pathway porphyrin-containing compound metabolism; protoporphyrin-IX biosynthesis; 5-aminolevulinate from L-glutamyl-tRNA(Glu): step 2/2. This Citrifermentans bemidjiense (strain ATCC BAA-1014 / DSM 16622 / JCM 12645 / Bem) (Geobacter bemidjiensis) protein is Glutamate-1-semialdehyde 2,1-aminomutase.